We begin with the raw amino-acid sequence, 311 residues long: Ribosomal RNA small subunit methyltransferase H (311 aa).

S-adenosyl-L-methionine-binding positions include 35–37 (GGH), D55, F80, D102, and Q109.

It belongs to the methyltransferase superfamily. RsmH family.

It is found in the cytoplasm. It catalyses the reaction cytidine(1402) in 16S rRNA + S-adenosyl-L-methionine = N(4)-methylcytidine(1402) in 16S rRNA + S-adenosyl-L-homocysteine + H(+). Its function is as follows. Specifically methylates the N4 position of cytidine in position 1402 (C1402) of 16S rRNA. The chain is Ribosomal RNA small subunit methyltransferase H from Pseudoalteromonas atlantica (strain T6c / ATCC BAA-1087).